Consider the following 702-residue polypeptide: Cytolytic toxin-beta (702 aa).

The segment at 2-264 (PSDILVVAAL…EAPQLMADSS (263 aa)) is structural MACPF/CDC pore-forming domain. 3 N-linked (GlcNAc...) asparagine glycosylation sites follow: asparagine 94, asparagine 101, and asparagine 286. The segment at 265–387 (TPILRKVRNT…DIIEEAKHKV (123 aa)) is structural FAT domain. The segment at 388 to 515 (VLSKSQMARE…PRIPPVETIQ (128 aa)) is thioredoxin (THX) domain. A B30.2/SPRY domain is found at 504 to 702 (SNPRIPPVET…ANGQIKLKGE (199 aa)).

This sequence belongs to the SNTX/VTX toxin family. As to quaternary structure, heterodimer of alpha and beta subunits; non-covalently linked. Also associates into tetramers or even higher aggregates. In terms of processing, intrachain disulfide bonds may be present in the heterodimer. Expressed by the venom gland.

It is found in the secreted. This heterodimer induces potent hemolytic activities (when tested on rabbit erythrocytes, EC(50)=25-56 ng/mL) due to its ability to form pores in the cell membrane. The pore may be composed of 10 alpha/beta heterodimers. The toxin shows cardiovascular effects that include a vasorelaxant action that may involve the L-arginine-nitric oxid synthase pathway. In addition, it displays edema-inducing activities, increases vascular permeability. It also shows myotoxic activities and interferes irreversibly with neuromuscular function. It also induces irreversible platelet aggregation in rabbit or rat (but not in human or mouse) whole blood. In addition, it has been observed to increase spontaneous quantal acetylcholine release from isolated frog cutaneous pectoris motor endings. The chain is Cytolytic toxin-beta from Scorpaena plumieri (Spotted scorpionfish).